The following is a 226-amino-acid chain: Large ribosomal subunit protein uL1 (226 aa).

Belongs to the universal ribosomal protein uL1 family. As to quaternary structure, part of the 50S ribosomal subunit.

Binds directly to 23S rRNA. The L1 stalk is quite mobile in the ribosome, and is involved in E site tRNA release. Its function is as follows. Protein L1 is also a translational repressor protein, it controls the translation of the L11 operon by binding to its mRNA. The sequence is that of Large ribosomal subunit protein uL1 from Treponema pallidum (strain Nichols).